Here is a 390-residue protein sequence, read N- to C-terminus: MKFVDEATILVVAGDGGNGCVSFRREKYIPKGGPDGGDGGDGGDVWLEADENLNTLIDYRFEKSFRAERGQNGQSRDCTGKRGKDVTIKVPVGTRVIDQGTGETMGDMTKHGQRLMVAKGGWHGLGNTRFKSSVNRTPRQKTMGTPGEKRDLQLELMLLADVGMLGMPNAGKSTFIRAVSAAKPKVADYPFTTLVPSLGVVRMDNEKSFVVADIPGLIEGAAEGAGLGIRFLKHLERCRVLLHLIDLDPIDGSDPAENARIIVGELEKYSEKLASKPRWLVFNKIDLLSREEAEAKAKAIADALGWEEKYYLISAASQMNVKDLCWDVMHFIIENPVVHEEEAKQPEKVEFMWDDYHRQQLEEMEAEAEEEWDDDWDEDDDEGVEIVYQR.

The 159-residue stretch at 1 to 159 (MKFVDEATIL…RDLQLELMLL (159 aa)) folds into the Obg domain. The segment at 127–146 (NTRFKSSVNRTPRQKTMGTP) is disordered. Positions 129-143 (RFKSSVNRTPRQKTM) are enriched in polar residues. Residues 160–333 (ADVGMLGMPN…LCWDVMHFII (174 aa)) form the OBG-type G domain. Residues 166–173 (GMPNAGKS), 191–195 (FTTLV), 213–216 (DIPG), 283–286 (NKID), and 314–316 (SAA) contribute to the GTP site. Ser173 and Thr193 together coordinate Mg(2+). The span at 364–384 (MEAEAEEEWDDDWDEDDDEGV) shows a compositional bias: acidic residues. The disordered stretch occupies residues 364–390 (MEAEAEEEWDDDWDEDDDEGVEIVYQR).

It belongs to the TRAFAC class OBG-HflX-like GTPase superfamily. OBG GTPase family. In terms of assembly, monomer. Requires Mg(2+) as cofactor.

It is found in the cytoplasm. Functionally, an essential GTPase which binds GTP, GDP and possibly (p)ppGpp with moderate affinity, with high nucleotide exchange rates and a fairly low GTP hydrolysis rate. Plays a role in control of the cell cycle, stress response, ribosome biogenesis and in those bacteria that undergo differentiation, in morphogenesis control. This chain is GTPase Obg, found in Cronobacter sakazakii (strain ATCC BAA-894) (Enterobacter sakazakii).